Consider the following 584-residue polypeptide: 4-hydroxybenzoate decarboxylase subunit C (584 aa).

This sequence belongs to the UbiD family. In terms of assembly, component of the decarboxylase complex composed of the subunits B and C (Potential). The subunit D usually found in other organisms seems to be absent.

It carries out the reaction 4-hydroxybenzoate + H(+) = phenol + CO2. The enzyme activity is enhanced by Mg(2+), Fe(2+), Mn(2+) and Ca(2+). No stimulation is observed with Cu(2+) and Zn(2+). Its function is as follows. Catalyzes the reversible decarboxylation of 4-hydroxybenzoate. The protein is 4-hydroxybenzoate decarboxylase subunit C of Chlamydia pneumoniae (Chlamydophila pneumoniae).